Consider the following 192-residue polypeptide: UPF0301 protein Bcen_0382 (192 aa).

Belongs to the UPF0301 (AlgH) family.

This chain is UPF0301 protein Bcen_0382, found in Burkholderia orbicola (strain AU 1054).